We begin with the raw amino-acid sequence, 139 residues long: uncharacterized protein (139 aa).

The next 3 membrane-spanning stretches (helical) occupy residues 19–39 (CIIF…FILG), 64–84 (IFNV…FNLF), and 89–109 (AITI…WILG).

Its subcellular location is the cell membrane. This is an uncharacterized protein from Methanocaldococcus jannaschii (strain ATCC 43067 / DSM 2661 / JAL-1 / JCM 10045 / NBRC 100440) (Methanococcus jannaschii).